The chain runs to 396 residues: Calreticulin (396 aa).

The N-terminal stretch at 1–15 (MKSLCLLAIVAVVSA) is a signal peptide. Cysteine 101 and cysteine 133 are oxidised to a cystine. An alpha-D-glucoside is bound by residues tyrosine 105, lysine 107, tyrosine 124, and aspartate 131. 7 tandem repeats follow at residues 186-197 (AQTGSLEEDWDL), 205-216 (DPDAKKPEDWDE), 222-233 (DAEDVKPEDWEK), 239-250 (DPDAKKPEDWDD), 254-264 (GEWEPPMIDNP), 268-278 (GEWKPKQIKNP), and 282-292 (GKWIHPEIENP). A 4 X approximate repeats region spans residues 186–250 (AQTGSLEEDW…DAKKPEDWDD (65 aa)). The interval 193-301 (EDWDLLPAKK…PEYTPDDELY (109 aa)) is P-domain. Residues 202–212 (KIKDPDAKKPE) show a composition bias toward basic and acidic residues. Residues 202–250 (KIKDPDAKKPEDWDEREYIDDAEDVKPEDWEKPEHIPDPDAKKPEDWDD) are disordered. Positions 213–224 (DWDEREYIDDAE) are enriched in acidic residues. The segment covering 225-246 (DVKPEDWEKPEHIPDPDAKKPE) has biased composition (basic and acidic residues). Residues 254 to 292 (GEWEPPMIDNPEYKGEWKPKQIKNPAYKGKWIHPEIENP) are 3 X approximate repeats. Residues 302 to 396 (LYENWGAIGF…KEEEEGHDEL (95 aa)) are C-domain. An an alpha-D-glucoside-binding site is contributed by aspartate 312. A compositionally biased stretch (basic and acidic residues) spans 342 to 380 (FDKLKTVEKEKKEKADEEARKVEEEARKKAEEEKEAKKD). Residues 342-396 (FDKLKTVEKEKKEKADEEARKVEEEARKKAEEEKEAKKDDDEEEEKEEEEGHDEL) form a disordered region. The segment covering 381-396 (DDEEEEKEEEEGHDEL) has biased composition (acidic residues). Positions 393-396 (HDEL) match the Prevents secretion from ER motif.

Belongs to the calreticulin family.

It localises to the endoplasmic reticulum lumen. Functionally, molecular calcium-binding chaperone promoting folding, oligomeric assembly and quality control in the ER via the calreticulin/calnexin cycle. This lectin may interact transiently with almost all of the monoglucosylated glycoproteins that are synthesized in the ER. Probably by controlling the folding of extracellular matrix protein unc-52/Perlecan, may play a role in the formation of fibrous organelles, a hemidesmosome-like structure attaching muscles to the epidermis. Protects dopaminergic neurons against oxidative stress-induced neurodegeneration. In Caenorhabditis briggsae, this protein is Calreticulin (crt-1).